The following is a 357-amino-acid chain: uncharacterized protein (357 aa).

This is an uncharacterized protein from Mycoplasma pneumoniae (strain ATCC 29342 / M129 / Subtype 1) (Mycoplasmoides pneumoniae).